The following is a 430-amino-acid chain: KICSTOR complex protein kaptin (430 aa).

Positions arginine 410–serine 430 are disordered. A compositionally biased stretch (basic and acidic residues) spans valine 420–serine 430.

As to quaternary structure, part of the KICSTOR complex composed of KPTN, ITFG2, KICS2 and SZT2. SZT2 probably serves as a link between the other three proteins in the KICSTOR complex and mediates the direct interaction with the GATOR1 complex. May associate with F-actin filaments.

Its subcellular location is the lysosome membrane. It localises to the cell projection. The protein resides in the lamellipodium. The protein localises to the stereocilium. In terms of biological role, as part of the KICSTOR complex functions in the amino acid-sensing branch of the TORC1 signaling pathway. Recruits, in an amino acid-independent manner, the GATOR1 complex to the lysosomal membranes and allows its interaction with GATOR2 and the RAG GTPases. Functions upstream of the RAG GTPases and is required to negatively regulate mTORC1 signaling in absence of amino acids. In absence of the KICSTOR complex mTORC1 is constitutively localized to the lysosome and activated. The KICSTOR complex is also probably involved in the regulation of mTORC1 by glucose. The sequence is that of KICSTOR complex protein kaptin from Mus musculus (Mouse).